The primary structure comprises 124 residues: uncharacterized protein (124 aa).

Residues 1–21 form the signal peptide; sequence MFLLSLLHFFHPSLIPSLSLS.

This is an uncharacterized protein from Schizosaccharomyces pombe (strain 972 / ATCC 24843) (Fission yeast).